The chain runs to 301 residues: Aquaporin NIP2-3 (301 aa).

Transmembrane regions (helical) follow at residues 57–77 and 91–111; these read VISE…AASI and SVAG…ISGA. The NPA 1 motif lies at 114 to 116; it reads NPA. A run of 3 helical transmembrane segments spans residues 132–154, 172–192, and 200–220; these read VPFY…KAVL, ALAI…AVAT, and LAGL…GPVS. The NPA 2 signature appears at 225 to 227; that stretch reads NPA. The helical transmembrane segment at 238–258 threads the bilayer; the sequence is VFTGLWIYFLGPVVGTLSGAW.

The protein belongs to the MIP/aquaporin (TC 1.A.8) family. NIP (TC 1.A.8.12) subfamily.

The protein resides in the membrane. Its function is as follows. Aquaporins facilitate the transport of water and small neutral solutes across cell membranes. The polypeptide is Aquaporin NIP2-3 (NIP2-3) (Zea mays (Maize)).